The chain runs to 236 residues: Pyridoxine 5'-phosphate synthase (236 aa).

A 3-amino-2-oxopropyl phosphate-binding site is contributed by Asn-6. 1-deoxy-D-xylulose 5-phosphate is bound at residue 8–9 (DH). 3-amino-2-oxopropyl phosphate is bound at residue Arg-17. The active-site Proton acceptor is the His-42. Arg-44 and His-49 together coordinate 1-deoxy-D-xylulose 5-phosphate. Glu-69 acts as the Proton acceptor in catalysis. Thr-99 lines the 1-deoxy-D-xylulose 5-phosphate pocket. His-190 (proton donor) is an active-site residue. Residues Gly-191 and 212–213 (GH) each bind 3-amino-2-oxopropyl phosphate.

It belongs to the PNP synthase family. As to quaternary structure, homooctamer; tetramer of dimers.

It is found in the cytoplasm. It catalyses the reaction 3-amino-2-oxopropyl phosphate + 1-deoxy-D-xylulose 5-phosphate = pyridoxine 5'-phosphate + phosphate + 2 H2O + H(+). It participates in cofactor biosynthesis; pyridoxine 5'-phosphate biosynthesis; pyridoxine 5'-phosphate from D-erythrose 4-phosphate: step 5/5. Catalyzes the complicated ring closure reaction between the two acyclic compounds 1-deoxy-D-xylulose-5-phosphate (DXP) and 3-amino-2-oxopropyl phosphate (1-amino-acetone-3-phosphate or AAP) to form pyridoxine 5'-phosphate (PNP) and inorganic phosphate. In Chloroherpeton thalassium (strain ATCC 35110 / GB-78), this protein is Pyridoxine 5'-phosphate synthase.